The sequence spans 87 residues: Apolipoprotein C-I (87 aa).

An N-terminal signal peptide occupies residues 1 to 26; that stretch reads MRLFLSLPVLVVVLAMVLEGPAPAQA.

It belongs to the apolipoprotein C1 family.

The protein resides in the secreted. Its function is as follows. Inhibitor of lipoprotein binding to the low density lipoprotein (LDL) receptor, LDL receptor-related protein, and very low density lipoprotein (VLDL) receptor. Associates with high density lipoproteins (HDL) and the triacylglycerol-rich lipoproteins in the plasma and makes up about 10% of the protein of the VLDL and 2% of that of HDL. Appears to interfere directly with fatty acid uptake and is also the major plasma inhibitor of cholesteryl ester transfer protein (CETP). Binds free fatty acids and reduces their intracellular esterification. Modulates the interaction of APOE with beta-migrating VLDL and inhibits binding of beta-VLDL to the LDL receptor-related protein. This Zalophus californianus (California sealion) protein is Apolipoprotein C-I (APOC1).